Consider the following 752-residue polypeptide: Protein GCN20 (752 aa).

An N-acetylalanine modification is found at alanine 2. 2 consecutive ABC transporter domains span residues 199-464 (IHID…RKNA) and 532-748 (IQLQ…AAGV). Residues 232-239 (GQNGIGKS) and 565-572 (GANGCGKT) contribute to the ATP site.

This sequence belongs to the ABC transporter superfamily. ABCF family. EF3 subfamily. In terms of assembly, interacts (via N-terminus) with GCN1 (via C-terminus); this interaction stimulates GCN2 kinase activity in response to amino acid starvation. The GCN1-GCN20 complex interacts with GCN2 on translating ribosomes in amino acid-starved cells; this association stimulates GCN2 kinase activation by uncharged tRNAs, and hence allowing GCN4 translational activation and derepression of amino acid biosynthetic genes. Associates with ribosomes.

Acts as a positive activator of the GCN2 protein kinase activity in response to in response to low amino acid, carbon, or purine availability. Component of the GCN1-GCN20 complex that forms a complex with GCN2 on translating ribosomes; during this process, GCN20 helps GCN1 to act as a chaperone to facilitate delivery of uncharged tRNAs that enter the A site of ribosomes to the tRNA-binding domain of GCN2, and hence stimulating GCN2 kinase activity. Participates in gene-specific mRNA translation activation, such as the transcriptional activator GCN4, by promoting the GCN2-mediated phosphorylation of eukaryotic translation initiation factor 2 (eIF-2-alpha/SUI2) on 'Ser-52', and hence allowing GCN4-mediated reprogramming of amino acid biosynthetic gene expression to alleviate nutrient depletion. This is Protein GCN20 from Saccharomyces cerevisiae (strain ATCC 204508 / S288c) (Baker's yeast).